The chain runs to 528 residues: Protein spinster homolog 1 (528 aa).

The disordered stretch occupies residues 1 to 38 (MAGSDTAPFLSQADDPDDGPAPGHPGLPGPMGNPKSGE). Ala2 bears the N-acetylalanine mark. A run of 12 helical transmembrane segments spans residues 60 to 80 (LIVVVLCYINLLNYMDRFTVA), 98 to 118 (GLIQTVFISSYMVLAPVFGYL), 126 to 146 (YLMCGGIAFWSLVTLGSSFIP), 160 to 180 (VGVGEASYSTIAPTLIADLFV), 187 to 207 (MLSIFYFAIPVGSGLGYIAGS), 218 to 238 (WALRVTPGLGVLAVLLLFLVV), 278 to 298 (LGFTAVAFVTGSLALWAPAFL), 323 to 343 (LIFGLITCLTGVLGVGLGVEI), 357 to 377 (LVCAAGLLGSSPFLFLSLACA), 381 to 401 (IVATYIFIFIGETLLSMNWAI), 421 to 441 (FQIVLSHLLGDAGSPYLIGLI), and 465 to 485 (MLCAFVGALGGAAFLGTAMFI). Ser518 is subject to Phosphoserine.

The protein belongs to the major facilitator superfamily. Spinster (TC 2.A.1.49) family. Interacts with BCL2 and BCL2L1.

Its subcellular location is the lysosome membrane. It catalyses the reaction a 1-acyl-sn-glycero-3-phosphocholine(out) + H(+)(out) = a 1-acyl-sn-glycero-3-phosphocholine(in) + H(+)(in). It carries out the reaction 1-hexadecanoyl-sn-glycero-3-phosphocholine(out) + H(+)(out) = 1-hexadecanoyl-sn-glycero-3-phosphocholine(in) + H(+)(in). The catalysed reaction is 1-(9Z-octadecenoyl)-sn-glycero-3-phosphocholine(out) + H(+)(out) = 1-(9Z-octadecenoyl)-sn-glycero-3-phosphocholine(in) + H(+)(in). The enzyme catalyses 1-(5Z,8Z,11Z,14Z-eicosatetraenoyl)-sn-glycero-3-phosphocholine(out) + H(+)(out) = 1-(5Z,8Z,11Z,14Z-eicosatetraenoyl)-sn-glycero-3-phosphocholine(in) + H(+)(in). It catalyses the reaction 1-(4Z,7Z,10Z,13Z,16Z,19Z-docosahexaenoyl)-sn-glycero-3-phosphocholine(out) + H(+)(out) = 1-(4Z,7Z,10Z,13Z,16Z,19Z-docosahexaenoyl)-sn-glycero-3-phosphocholine(in) + H(+)(in). It carries out the reaction a 1-acyl-sn-glycero-3-phosphoethanolamine(out) + H(+)(out) = a 1-acyl-sn-glycero-3-phosphoethanolamine(in) + H(+)(in). The catalysed reaction is 1-(9Z-octadecenoyl)-sn-glycero-3-phosphoethanolamine(out) + H(+)(out) = 1-(9Z-octadecenoyl)-sn-glycero-3-phosphoethanolamine(in) + H(+)(in). The enzyme catalyses 1-acyl-sn-glycero-3-phospho-(1'-sn-glycerol)(out) + H(+)(out) = 1-acyl-sn-glycero-3-phospho-(1'-sn-glycerol)(in) + H(+)(in). It catalyses the reaction 1-(9Z-octadecenoyl)-sn-glycero-3-phospho-(1'-sn-glycerol)(out) + H(+)(out) = 1-(9Z-octadecenoyl)-sn-glycero-3-phospho-(1'-sn-glycerol)(in) + H(+)(in). It carries out the reaction a 1-O-(1Z-alkenyl)-sn-glycero-3-phosphocholine(out) + H(+)(out) = a 1-O-(1Z-alkenyl)-sn-glycero-3-phosphocholine(in) + H(+)(in). The catalysed reaction is 1-(1Z-hexadecenyl)-sn-glycero-3-phosphocholine(out) + H(+)(out) = 1-(1Z-hexadecenyl)-sn-glycero-3-phosphocholine(in) + H(+)(in). The enzyme catalyses a 1-O-(1Z-alkenyl)-sn-glycero-3-phosphoethanolamine(out) + H(+)(out) = a 1-O-(1Z-alkenyl)-sn-glycero-3-phosphoethanolamine(in) + H(+)(in). It catalyses the reaction 1-O-(1Z-hexadecenyl)-sn-glycero-3-phosphoethanolamine(out) + H(+)(out) = 1-O-(1Z-hexadecenyl)-sn-glycero-3-phosphoethanolamine(in) + H(+)(in). Functionally, plays a critical role in the phospholipid salvage pathway from lysosomes to the cytosol. Mediates the rate-limiting, proton-dependent, lysosomal efflux of lysophospholipids, which can then be reacylated by acyltransferases in the endoplasmic reticulum to form phospholipids. Selective for zwitterionic headgroups such as lysophosphatidylcholine (LPC) and lysophosphatidylethanolamine (LPE), can also transport lysophosphatidylglycerol (LPG), but not other anionic lysophospholipids, sphingosine, nor sphingomyelin. Transports lysophospholipids with saturated, monounsaturated, and polyunsaturated fatty acids, such as 1-hexadecanoyl-sn-glycero-3-phosphocholine, 1-(9Z-octadecenoyl)-sn-glycero-3-phosphocholine and 1-(4Z,7Z,10Z,13Z,16Z,19Z-docosahexaenoyl)-sn-glycero-3-phosphocholine, respectively. Can also transport lysoplasmalogen (LPC with a fatty alcohol) such as 1-(1Z-hexadecenyl)-sn-glycero-3-phosphocholine. Essential player in lysosomal homeostasis. Crucial for cell survival under conditions of nutrient limitation. May be involved in necrotic or autophagic cell death. In Rattus norvegicus (Rat), this protein is Protein spinster homolog 1 (Spns1).